A 197-amino-acid polypeptide reads, in one-letter code: ATP-dependent Clp protease proteolytic subunit (197 aa).

The Nucleophile role is filled by S98. H123 is an active-site residue.

This sequence belongs to the peptidase S14 family. As to quaternary structure, fourteen ClpP subunits assemble into 2 heptameric rings which stack back to back to give a disk-like structure with a central cavity, resembling the structure of eukaryotic proteasomes.

The protein localises to the cytoplasm. The catalysed reaction is Hydrolysis of proteins to small peptides in the presence of ATP and magnesium. alpha-casein is the usual test substrate. In the absence of ATP, only oligopeptides shorter than five residues are hydrolyzed (such as succinyl-Leu-Tyr-|-NHMec, and Leu-Tyr-Leu-|-Tyr-Trp, in which cleavage of the -Tyr-|-Leu- and -Tyr-|-Trp bonds also occurs).. Its function is as follows. Cleaves peptides in various proteins in a process that requires ATP hydrolysis. Has a chymotrypsin-like activity. Plays a major role in the degradation of misfolded proteins. The sequence is that of ATP-dependent Clp protease proteolytic subunit from Limosilactobacillus reuteri (strain DSM 20016) (Lactobacillus reuteri).